We begin with the raw amino-acid sequence, 85 residues long: MMSRNRRMRDLDSNPCLEETDASTKCMDDNRYEKDLCTPYFVKYKNCRKFWNGIMVTRRREGTVPYMPTAEERKHILESMKSLPY.

The CHCH domain maps to 13-55; sequence SNPCLEETDASTKCMDDNRYEKDLCTPYFVKYKNCRKFWNGIM. 2 consecutive short sequence motifs (cx9C motif) follow at residues 16-26 and 37-47; these read CLEETDASTKC and CTPYFVKYKNC. Cystine bridges form between cysteine 16/cysteine 47 and cysteine 26/cysteine 37.

This sequence belongs to the CHCHD7 family.

The protein localises to the mitochondrion intermembrane space. The protein is Coiled-coil-helix-coiled-coil-helix domain-containing protein 7 (chchd7) of Xenopus tropicalis (Western clawed frog).